The chain runs to 482 residues: C3a anaphylatoxin chemotactic receptor (482 aa).

Residues 1-23 (MASFSAETNSTDLLSQPWNEPPV) are Extracellular-facing. N-linked (GlcNAc...) asparagine glycosylation is present at Asn-9. A helical transmembrane segment spans residues 24–46 (ILSMVILSLTFLLGLPGNGLVLW). Residues 47 to 57 (VAGLKMQRTVN) lie on the Cytoplasmic side of the membrane. A helical membrane pass occupies residues 58 to 80 (TIWFLHLTLADLLCCLSLPFSLA). Residues 81–96 (HLALQGQWPYGRFLCK) lie on the Extracellular side of the membrane. The cysteines at positions 95 and 172 are disulfide-linked. Residues 97-118 (LIPSIIVLNMFASVFLLTAISL) traverse the membrane as a helical segment. Topologically, residues 119–139 (DRCLVVFKPIWCQNHRNVGMA) are cytoplasmic. Residues 140 to 160 (CSICGCIWVVAFVMCIPVFVY) form a helical membrane-spanning segment. Residues 161 to 340 (REIFTTDNHN…TPLVAITITR (180 aa)) lie on the Extracellular side of the membrane. Sulfotyrosine occurs at positions 174 and 184. Asn-194 carries an N-linked (GlcNAc...) asparagine glycan. O-linked (GalNAc...) serine glycosylation is present at Ser-266. At Tyr-318 the chain carries Sulfotyrosine. The helical transmembrane segment at 341-360 (LVVGFLLPSVIMIACYSFIV) threads the bilayer. At 361–377 (FRMQRGRFAKSQSKTFR) the chain is on the cytoplasmic side. The helical transmembrane segment at 378–400 (VAVVVVAVFLVCWTPYHIFGVLS) threads the bilayer. The Extracellular segment spans residues 401–417 (LLTDPETPLGKTLMSWD). A helical membrane pass occupies residues 418-438 (HVCIALASANSCFNPFLYALL). Residues 439 to 482 (GKDFRKKARQSIQGILEAAFSEELTRSTHCPSNNVISERNSTTV) lie on the Cytoplasmic side of the membrane. Phosphoserine is present on Ser-459. Thr-463 carries the post-translational modification Phosphothreonine.

The protein belongs to the G-protein coupled receptor 1 family. In terms of assembly, interacts with VGF-derived peptide TLQP-21. Post-translationally, among the sulfation sites Tyr-174 is essential for binding of C3a anaphylatoxin. In terms of processing, O-glycosylated. In terms of tissue distribution, widely expressed in several differentiated hematopoietic cell lines, in the lung, spleen, ovary, placenta, small intestine, throughout the brain, heart, and endothelial cells. Mostly expressed in lymphoid tissues.

It localises to the cell membrane. In terms of biological role, receptor for the chemotactic and inflammatory peptide anaphylatoxin C3a. This receptor stimulates chemotaxis, granule enzyme release and superoxide anion production. This is C3a anaphylatoxin chemotactic receptor (C3AR1) from Homo sapiens (Human).